Here is a 586-residue protein sequence, read N- to C-terminus: Inner membrane protein YejM (586 aa).

The Cytoplasmic portion of the chain corresponds to 1–20; that stretch reads MVTHRQRYREKVSQMVSWGH. Residues 21-43 form a helical membrane-spanning segment; it reads WFALFNILLSLVIGSRYLFIADW. Residues 44–57 are Periplasmic-facing; it reads PTTLAGRIYSYVSI. A helical transmembrane segment spans residues 58–80; that stretch reads IGHFSFLVFATYLLILFPLTFIV. Residues 81 to 84 are Cytoplasmic-facing; sequence GSQR. A helical transmembrane segment spans residues 85–103; it reads LMRFLSVILATAGMTLLLI. At 104–134 the chain is on the periplasmic side; it reads DSEVFTRFHLHLNPIVWQLVINPDENEMARD. The helical transmembrane segment at 135-157 threads the bilayer; sequence WQLMFISVPVILLLELVFATWSW. Over 158 to 168 the chain is Cytoplasmic; it reads QKLRSLTRRRR. Residues 169 to 191 form a helical membrane-spanning segment; that stretch reads FARPLAAFLFIAFIASHVVYIWA. Topologically, residues 192–586 are periplasmic; sequence DANFYRPITM…LTDEKRFIAN (395 aa).

To H.influenzae HI_0842.

It localises to the cell inner membrane. This chain is Inner membrane protein YejM (yejM), found in Escherichia coli O157:H7.